A 403-amino-acid chain; its full sequence is MFGHFKLVYPAPISEPIQSRDSNAYMMETLRNSGLNLKNDFGIGRKIWRVFSFTYNMVILPVSFPINYVIHLAEFPPELLLQSLQLCLNTWCFALKFFTLIVYTHRLELANKHFDELDKYCVKPAEKRKVRDMVATITRLYLTFVVVYVLYATSTLLDGLLHHRVPYNTYYPFINWRVDRTQMYIQSFLEYFTVGYAIYVATATDSYPVIYVAALRTHILLLKDRIIYLGDPSNEGSSDPSYMFKSLVDCIKAHRTMLNFCDAIQPIISGTIFAQFIICGSILGIIMINMVLFADQSTRFGIVIYVMAVLLQTFPLCFYCNAIVDDCKELAHALFHSAWWVQDKRYQRTVIQFLQKLQQPMTFTAMNIFNINLATNINVAKFAFTVYAIASGMNLDQKLSIKE.

Residues 1–49 lie on the Cytoplasmic side of the membrane; the sequence is MFGHFKLVYPAPISEPIQSRDSNAYMMETLRNSGLNLKNDFGIGRKIWR. The chain crosses the membrane as a helical span at residues 50-70; it reads VFSFTYNMVILPVSFPINYVI. Over 71 to 83 the chain is Extracellular; sequence HLAEFPPELLLQS. The helical transmembrane segment at 84–104 threads the bilayer; that stretch reads LQLCLNTWCFALKFFTLIVYT. Residues 105 to 139 lie on the Cytoplasmic side of the membrane; the sequence is HRLELANKHFDELDKYCVKPAEKRKVRDMVATITR. Residues 140–160 form a helical membrane-spanning segment; the sequence is LYLTFVVVYVLYATSTLLDGL. Residues 161-193 lie on the Extracellular side of the membrane; the sequence is LHHRVPYNTYYPFINWRVDRTQMYIQSFLEYFT. The chain crosses the membrane as a helical span at residues 194–214; sequence VGYAIYVATATDSYPVIYVAA. The Cytoplasmic portion of the chain corresponds to 215–271; the sequence is LRTHILLLKDRIIYLGDPSNEGSSDPSYMFKSLVDCIKAHRTMLNFCDAIQPIISGT. A helical transmembrane segment spans residues 272–292; it reads IFAQFIICGSILGIIMINMVL. Residues 293-299 lie on the Extracellular side of the membrane; the sequence is FADQSTR. A helical transmembrane segment spans residues 300 to 320; the sequence is FGIVIYVMAVLLQTFPLCFYC. Over 321-372 the chain is Cytoplasmic; sequence NAIVDDCKELAHALFHSAWWVQDKRYQRTVIQFLQKLQQPMTFTAMNIFNIN. A helical transmembrane segment spans residues 373–393; the sequence is LATNINVAKFAFTVYAIASGM. The Extracellular portion of the chain corresponds to 394 to 403; the sequence is NLDQKLSIKE.

Belongs to the insect chemoreceptor superfamily. Heteromeric odorant receptor channel (TC 1.A.69) family. Or2a subfamily. In terms of assembly, interacts with Orco. Complexes exist early in the endomembrane system in olfactory sensory neurons (OSNs), coupling these complexes to the conserved ciliary trafficking pathway. As to expression, expressed in 16 olfactory receptor neurons in a broad area across the antenna, including both anterior and posterior faces and in the maxillary palp. This expression pattern matches the distribution of the small sensilla basiconica. Expression in the antenna is observed late in antennal development at 93 hours APF.

It localises to the cell membrane. Odorant receptor which mediates acceptance or avoidance behavior, depending on its substrates. The odorant receptor repertoire encodes a large collection of odor stimuli that vary widely in identity, intensity, and duration. May form a complex with Orco to form odorant-sensing units, providing sensitive and prolonged odorant signaling and calcium permeability. This Drosophila melanogaster (Fruit fly) protein is Odorant receptor 43b (Or43b).